The primary structure comprises 86 residues: Colicin-E9 immunity protein (86 aa).

Belongs to the colicins ColE2/ColE8/ColE9 and pyocins S1/S2 family.

In terms of biological role, this protein is able to protect a cell, which harbors the plasmid ColE9 encoding colicin E9, against colicin E9, it binds specifically to the DNase-type colicin and inhibits its bactericidal activity. The protein is Colicin-E9 immunity protein (imm) of Escherichia coli.